Here is a 171-residue protein sequence, read N- to C-terminus: Serine acetyltransferase (171 aa).

This sequence belongs to the transferase hexapeptide repeat family.

The protein resides in the cytoplasm. It carries out the reaction L-serine + acetyl-CoA = O-acetyl-L-serine + CoA. It functions in the pathway amino-acid biosynthesis; L-cysteine biosynthesis; L-cysteine from L-serine: step 1/2. The polypeptide is Serine acetyltransferase (cysE) (Helicobacter pylori (strain J99 / ATCC 700824) (Campylobacter pylori J99)).